The sequence spans 378 residues: SWI/SNF-related matrix-associated actin-dependent regulator of chromatin subfamily B member 1 (378 aa).

A DNA-binding region spans residues 1–106 (MIMALSKTFG…DEKYKAVSIS (106 aa)).

The protein belongs to the SNF5 family. As to quaternary structure, component of the multiprotein chromatin-remodeling complexes SWI/SNF. Component of neural progenitors-specific chromatin remodeling complex (npBAF complex) and the neuron-specific chromatin remodeling complex (nBAF complex). Component of the BAF (SWI/SNF) chromatin remodeling complex. Component of the SWI/SNF-B (PBAF) chromatin remodeling complex. Binds to double-stranded DNA.

The protein localises to the nucleus. Functionally, involved in chromatin-remodeling. Core component of the BAF (SWI/SNF) complex. This ATP-dependent chromatin-remodeling complex plays important roles in cell proliferation and differentiation, in cellular antiviral activities and inhibition of tumor formation. Belongs to the neural progenitors-specific chromatin remodeling complex (npBAF complex) and the neuron-specific chromatin remodeling complex (nBAF complex) and may play a role in neural development. The polypeptide is SWI/SNF-related matrix-associated actin-dependent regulator of chromatin subfamily B member 1 (smarcb1) (Xenopus laevis (African clawed frog)).